A 644-amino-acid chain; its full sequence is Chaperone protein HtpG (644 aa).

Positions 1-352 (MNARVEQLEF…AQDMSLNVSR (352 aa)) are a; substrate-binding. The segment at 353-566 (EILQQDRQIK…AFGITPALAR (214 aa)) is b. Residues 567 to 644 (LYRASGQDIP…ILADRLARTL (78 aa)) form a c region.

It belongs to the heat shock protein 90 family. As to quaternary structure, homodimer.

The protein resides in the cytoplasm. In terms of biological role, molecular chaperone. Has ATPase activity. This is Chaperone protein HtpG from Mycobacterium avium (strain 104).